The following is a 275-amino-acid chain: NH(3)-dependent NAD(+) synthetase (275 aa).

An ATP-binding site is contributed by 39–46; sequence GLSGGVDS. Asp45 contacts Mg(2+). Position 124 (Arg124) interacts with deamido-NAD(+). ATP is bound at residue Thr144. Glu149 is a binding site for Mg(2+). Positions 157 and 164 each coordinate deamido-NAD(+). ATP is bound by residues Lys173 and Ser195. Deamido-NAD(+) is bound at residue 255–256; the sequence is HK.

Belongs to the NAD synthetase family. Homodimer.

It catalyses the reaction deamido-NAD(+) + NH4(+) + ATP = AMP + diphosphate + NAD(+) + H(+). The protein operates within cofactor biosynthesis; NAD(+) biosynthesis; NAD(+) from deamido-NAD(+) (ammonia route): step 1/1. Functionally, catalyzes the ATP-dependent amidation of deamido-NAD to form NAD. Uses ammonia as a nitrogen source. This is NH(3)-dependent NAD(+) synthetase from Staphylothermus marinus (strain ATCC 43588 / DSM 3639 / JCM 9404 / F1).